Here is a 335-residue protein sequence, read N- to C-terminus: MASTIADNADNNGNSKDSVQYLRKVLTSESSPLAQRFRALFSLKHLASSKPPTEETLPAIEAIAAAFSSPSALLKHELAYCLGQTRNLDTVPHLRKVLEDTQEDAMCRHEAAEALGALGDAGSLAILQRLRDDESEEEVVRETCDIAVDRILWETSKDSKSEKLKQSDFTSIDPAPPLPLSSAEQSIPELKQILLDASLPLFKRYRAMFALRDMCSPPDLPTAVPAIEALAEGFKDRSALFRHEIAFVFGQLSHPASIPSLVATLSDKNEVGMVRHEAAEALGSLGAEDGVEETLKRFVNDPETVVRDSIIVALDMAEYEKSGEQEYILEQPVAA.

HEAT-like PBS-type repeat units lie at residues 74–100, 107–133, 203–233, 241–267, and 274–301; these read LKHE…VLED, CRHE…LRDD, KRYR…LAEG, FRHE…TLSD, and VRHE…FVND. Fe cation is bound by residues H76, E77, H109, and E110. 4 residues coordinate Fe cation: H243, E244, H276, and E277.

It belongs to the deoxyhypusine hydroxylase family. It depends on Fe(2+) as a cofactor.

It localises to the cytoplasm. It is found in the nucleus. The catalysed reaction is [eIF5A protein]-deoxyhypusine + AH2 + O2 = [eIF5A protein]-hypusine + A + H2O. Its pathway is protein modification; eIF5A hypusination. In terms of biological role, catalyzes the hydroxylation of the N(6)-(4-aminobutyl)-L-lysine intermediate to form hypusine, an essential post-translational modification only found in mature eIF-5A factor. This chain is Deoxyhypusine hydroxylase, found in Coccidioides immitis (strain RS) (Valley fever fungus).